The primary structure comprises 63 residues: Mu-like prophage FluMu protein gp38 (63 aa).

This sequence to phage Mu protein gp38.

In Haemophilus influenzae (strain ATCC 51907 / DSM 11121 / KW20 / Rd), this protein is Mu-like prophage FluMu protein gp38.